Here is a 982-residue protein sequence, read N- to C-terminus: NACHT, LRR and PYD domains-containing protein 4C (982 aa).

In terms of domain architecture, Pyrin spans Met-1–Gly-93. Residues His-148–His-471 enclose the NACHT domain. Residue Gly-154–Ser-161 coordinates ATP. 7 LRR repeats span residues Cys-594–Thr-617, Asn-689–Gln-716, Ser-746–Pro-773, Asn-802–Gly-825, Leu-827–Ile-844, Asn-859–Asp-882, and Cys-916–Ala-940.

This sequence belongs to the NLRP family.

May be involved in inflammation and recognition of cytosolic pathogen-associated molecular patterns (PAMPs) not intercepted by membrane-bound receptors. This chain is NACHT, LRR and PYD domains-containing protein 4C (Nlrp4c), found in Mus musculus (Mouse).